The sequence spans 72 residues: Translational regulator CsrA (72 aa).

It belongs to the CsrA/RsmA family. As to quaternary structure, homodimer; the beta-strands of each monomer intercalate to form a hydrophobic core, while the alpha-helices form wings that extend away from the core.

Its subcellular location is the cytoplasm. Its function is as follows. A translational regulator that binds mRNA to regulate translation initiation and/or mRNA stability. Usually binds in the 5'-UTR at or near the Shine-Dalgarno sequence preventing ribosome-binding, thus repressing translation. Its main target seems to be the major flagellin gene, while its function is anatagonized by FliW. This Clostridium botulinum (strain Loch Maree / Type A3) protein is Translational regulator CsrA.